The chain runs to 246 residues: 1-(5-phosphoribosyl)-5-[(5-phosphoribosylamino)methylideneamino] imidazole-4-carboxamide isomerase (246 aa).

Asp-8 (proton acceptor) is an active-site residue. Asp-130 functions as the Proton donor in the catalytic mechanism.

Belongs to the HisA/HisF family.

The protein resides in the cytoplasm. It carries out the reaction 1-(5-phospho-beta-D-ribosyl)-5-[(5-phospho-beta-D-ribosylamino)methylideneamino]imidazole-4-carboxamide = 5-[(5-phospho-1-deoxy-D-ribulos-1-ylimino)methylamino]-1-(5-phospho-beta-D-ribosyl)imidazole-4-carboxamide. It participates in amino-acid biosynthesis; L-histidine biosynthesis; L-histidine from 5-phospho-alpha-D-ribose 1-diphosphate: step 4/9. The polypeptide is 1-(5-phosphoribosyl)-5-[(5-phosphoribosylamino)methylideneamino] imidazole-4-carboxamide isomerase (Shigella sonnei (strain Ss046)).